The sequence spans 319 residues: 7,8-didemethyl-8-hydroxy-5-deazariboflavin synthase (319 aa).

The 232-residue stretch at 5-236 (VTYSPAYTIV…SNITLQIPPN (232 aa)) folds into the Radical SAM core domain. 3 residues coordinate [4Fe-4S] cluster: Cys19, Cys23, and Cys26.

Belongs to the radical SAM superfamily. CofG family. Consists of two subunits, CofG and CofH. The cofactor is [4Fe-4S] cluster.

It catalyses the reaction 5-amino-5-(4-hydroxybenzyl)-6-(D-ribitylimino)-5,6-dihydrouracil + S-adenosyl-L-methionine = 7,8-didemethyl-8-hydroxy-5-deazariboflavin + 5'-deoxyadenosine + L-methionine + NH4(+) + H(+). It participates in cofactor biosynthesis; coenzyme F0 biosynthesis. In terms of biological role, catalyzes the radical-mediated synthesis of 7,8-didemethyl-8-hydroxy-5-deazariboflavin from 5-amino-5-(4-hydroxybenzyl)-6-(D-ribitylimino)-5,6-dihydrouracil. The protein is 7,8-didemethyl-8-hydroxy-5-deazariboflavin synthase of Trichodesmium erythraeum (strain IMS101).